The following is a 434-amino-acid chain: Flagellum-specific ATP synthase (434 aa).

An ATP-binding site is contributed by 164-171 (AGSGVGKS).

The protein belongs to the ATPase alpha/beta chains family.

The protein resides in the cytoplasm. It catalyses the reaction ATP + H2O + 4 H(+)(in) = ADP + phosphate + 5 H(+)(out). Its function is as follows. Probable catalytic subunit of a protein translocase for flagellum-specific export, or a proton translocase involved in local circuits at the flagellum. In Helicobacter pylori (strain J99 / ATCC 700824) (Campylobacter pylori J99), this protein is Flagellum-specific ATP synthase (fliI).